Here is an 802-residue protein sequence, read N- to C-terminus: Phenylalanine--tRNA ligase beta subunit (802 aa).

A tRNA-binding domain is found at 39-150 (AKALKPFTIA…ADAPIGAAYA (112 aa)). A B5 domain is found at 400–475 (GDDRVIDFPV…RIYGVDKVPM (76 aa)). Mg(2+)-binding residues include D453, D459, E462, and E463. Residues 708–801 (SAFQPVSRDF…VTKKTGGTLR (94 aa)) form the FDX-ACB domain.

It belongs to the phenylalanyl-tRNA synthetase beta subunit family. Type 1 subfamily. Tetramer of two alpha and two beta subunits. Requires Mg(2+) as cofactor.

Its subcellular location is the cytoplasm. It catalyses the reaction tRNA(Phe) + L-phenylalanine + ATP = L-phenylalanyl-tRNA(Phe) + AMP + diphosphate + H(+). The polypeptide is Phenylalanine--tRNA ligase beta subunit (Bradyrhizobium diazoefficiens (strain JCM 10833 / BCRC 13528 / IAM 13628 / NBRC 14792 / USDA 110)).